The primary structure comprises 143 residues: Heat shock protein Hsp-16.48/Hsp-16.49 (143 aa).

Residues 35-140 (HNSFNFSDNI…SSRSIPINFV (106 aa)) form the sHSP domain.

Belongs to the small heat shock protein (HSP20) family.

In Caenorhabditis elegans, this protein is Heat shock protein Hsp-16.48/Hsp-16.49 (hsp-16.48).